We begin with the raw amino-acid sequence, 268 residues long: Cytochrome c oxidase subunit 3 (268 aa).

The next 7 membrane-spanning stretches (helical) occupy residues 23 to 43, 49 to 69, 88 to 108, 141 to 161, 166 to 186, 203 to 223, and 246 to 266; these read ILVS…MHGF, WVVF…RDII, IGFI…FWAF, TILL…LLGG, TLLG…CQYM, VFYF…IMLG, and ILYY…FYWW.

Belongs to the cytochrome c oxidase subunit 3 family. Component of the cytochrome c oxidase (complex IV, CIV), a multisubunit enzyme composed of a catalytic core of 3 subunits and several supernumerary subunits. The complex exists as a monomer or a dimer and forms supercomplexes (SCs) in the inner mitochondrial membrane with ubiquinol-cytochrome c oxidoreductase (cytochrome b-c1 complex, complex III, CIII).

It is found in the mitochondrion inner membrane. The enzyme catalyses 4 Fe(II)-[cytochrome c] + O2 + 8 H(+)(in) = 4 Fe(III)-[cytochrome c] + 2 H2O + 4 H(+)(out). In terms of biological role, component of the cytochrome c oxidase, the last enzyme in the mitochondrial electron transport chain which drives oxidative phosphorylation. The respiratory chain contains 3 multisubunit complexes succinate dehydrogenase (complex II, CII), ubiquinol-cytochrome c oxidoreductase (cytochrome b-c1 complex, complex III, CIII) and cytochrome c oxidase (complex IV, CIV), that cooperate to transfer electrons derived from NADH and succinate to molecular oxygen, creating an electrochemical gradient over the inner membrane that drives transmembrane transport and the ATP synthase. Cytochrome c oxidase is the component of the respiratory chain that catalyzes the reduction of oxygen to water. Electrons originating from reduced cytochrome c in the intermembrane space (IMS) are transferred via the dinuclear copper A center (CU(A)) of subunit 2 and heme A of subunit 1 to the active site in subunit 1, a binuclear center (BNC) formed by heme A3 and copper B (CU(B)). The BNC reduces molecular oxygen to 2 water molecules using 4 electrons from cytochrome c in the IMS and 4 protons from the mitochondrial matrix. The polypeptide is Cytochrome c oxidase subunit 3 (COX3) (Yarrowia lipolytica (strain CLIB 122 / E 150) (Yeast)).